The primary structure comprises 159 residues: 2-C-methyl-D-erythritol 2,4-cyclodiphosphate synthase (159 aa).

Positions 8 and 10 each coordinate a divalent metal cation. 4-CDP-2-C-methyl-D-erythritol 2-phosphate contacts are provided by residues 8 to 10 (DVH) and 34 to 35 (HS). H42 is an a divalent metal cation binding site. 4-CDP-2-C-methyl-D-erythritol 2-phosphate is bound by residues 56 to 58 (DIG), 61 to 65 (FPDTD), 132 to 135 (TTTE), F139, and R142.

The protein belongs to the IspF family. In terms of assembly, homotrimer. A divalent metal cation is required as a cofactor.

It carries out the reaction 4-CDP-2-C-methyl-D-erythritol 2-phosphate = 2-C-methyl-D-erythritol 2,4-cyclic diphosphate + CMP. The protein operates within isoprenoid biosynthesis; isopentenyl diphosphate biosynthesis via DXP pathway; isopentenyl diphosphate from 1-deoxy-D-xylulose 5-phosphate: step 4/6. Involved in the biosynthesis of isopentenyl diphosphate (IPP) and dimethylallyl diphosphate (DMAPP), two major building blocks of isoprenoid compounds. Catalyzes the conversion of 4-diphosphocytidyl-2-C-methyl-D-erythritol 2-phosphate (CDP-ME2P) to 2-C-methyl-D-erythritol 2,4-cyclodiphosphate (ME-CPP) with a corresponding release of cytidine 5-monophosphate (CMP). In Syntrophobacter fumaroxidans (strain DSM 10017 / MPOB), this protein is 2-C-methyl-D-erythritol 2,4-cyclodiphosphate synthase.